A 347-amino-acid chain; its full sequence is D-alanine--D-alanine ligase (347 aa).

An ATP-grasp domain is found at 134–332; it reads KLYAKDLGVK…LAQSLPKTPK (199 aa). Position 161-216 (161-216) interacts with ATP; that stretch reads LMNFNFPFIIKPNNAGSSLGVNVVKEEKELVYALDGAFEYSKEVLIEPFIQGVKEY. Residues aspartate 288, glutamate 300, and asparagine 302 each coordinate Mg(2+).

Belongs to the D-alanine--D-alanine ligase family. Requires Mg(2+) as cofactor. Mn(2+) serves as cofactor.

It is found in the cytoplasm. It carries out the reaction 2 D-alanine + ATP = D-alanyl-D-alanine + ADP + phosphate + H(+). It participates in cell wall biogenesis; peptidoglycan biosynthesis. Its function is as follows. Cell wall formation. This chain is D-alanine--D-alanine ligase, found in Helicobacter pylori (strain ATCC 700392 / 26695) (Campylobacter pylori).